Consider the following 787-residue polypeptide: MDDDQQFCLRWNNHQSTLISVFDTLLENETLVDCTLAAEGKFLKAHKVVLSACSPYFATLLQEQYDKHPIFILKDVKYQELRAMMDYMYRGEVNISQDQLAALLKAAESLQIKGLSDNRTGGGVAPKPESSGHHRGGKLSGAYTLEQTKRARLATGGAMDTSGDVSGSREGSSSPSRRRRKVRRRSMENDAHDNSNSSVLQAAASNQSILQQTGAGLAVSALVTTQLSSGPAAGTSSQASSTQQQQPLTSTNVTKKTESAKLTSSTAAPASGASASAAVQQAHLHQQQAQTTSDAINTENVQAQSQGGAQGVQGDDEDIDEGSAVGGPNSATGPNPASASASAVHAGVVVKQLASVVDKSSSNHKHKIKDNSVSSVGSEMVIEPKAEYDDDAHDENVEDLTLDEEDMTMEELDQTAGTSQGGEGSSQTYATWQHDRSQDELGLMAQDAQQRDPQDLSITRIAGLTWNEWNARLAMPLVTLREGVQPLVFPTDLSVDKQQGAAGLTAKDVNVSGRKTPTDGGGCKSEPRAASTPARTHSSSNHSSNGNGSGKPTKTSSGGKLNHLTEEEATALMLKAVAEKQAAAAAGTELSFGEDQASSGNGNSSDYPATLSGAVTFADVGGPAGLCHINILNSISAMNNLISGSTAAGVGITTGSGQSPSNSGHNNSAGGGSSVLGGADNGAGHPCPVCGRVYKLKSSLRNHQKWECGKEPQFQCPFCVYRAKQKMHIGRHMERMHKEKFKLEDVKNFAGSSGLDGDSSGATATAASVVAAAAALVSGVELHPHFS.

The BTB domain occupies 32 to 97 (VDCTLAAEGK…MYRGEVNISQ (66 aa)). Disordered regions lie at residues 115-200 (LSDN…SSVL), 228-340 (SSGP…ASAS), 506-560 (AKDV…SGGK), and 653-677 (TTGSGQSPSNSGHNNSAGGGSSVLG). Composition is skewed to low complexity over residues 162-175 (SGDVSGSREGSSSP), 228-251 (SSGPAAGTSSQASSTQQQQPLTST), 263-293 (TSSTAAPASGASASAAVQQAHLHQQQAQTTS), 329-340 (NSATGPNPASAS), 537-560 (HSSSNHSSNGNGSGKPTKTSSGGK), and 659-668 (SPSNSGHNNS). The C2H2-type 1; degenerate zinc-finger motif lies at 685-707 (HPCPVCGRVYKLKSSLRNHQKWE). The C2H2-type 2 zinc-finger motif lies at 714–737 (FQCPFCVYRAKQKMHIGRHMERMH).

As to quaternary structure, isoform D interacts with JIL-1. By stage 11, isoform B is expressed throughout the mesoderm, whereas isoform A, isoform D and isoform L are expressed throughout the ectoderm. Expression becomes restricted during later stages; starting from stage 14 to 16, isoform B is expressed in muscle. Isoform A, isoform D, and at low levels isoform B, are expressed in the CNS. Expression is also seen in specific types of cells in the embryo; isoform A and isoform L are expressed in a dynamic pattern in the ventral neurogenic region starting at stage 7. Isoform L is expressed around the tracheal pits at stage 11.

It is found in the nucleus. In terms of biological role, putative transcription factor required for axon growth and guidance in the central and peripheral nervous systems. Repels CNS axons away from the midline by promoting the expression of the midline repellent sli and its receptor robo. This is Longitudinals lacking protein, isoforms A/B/D/L from Drosophila melanogaster (Fruit fly).